We begin with the raw amino-acid sequence, 594 residues long: RING finger protein 207 (594 aa).

An RING-type zinc finger spans residues 25–64 (CPLCHAQYERPCLLDCFHDFCAGCLRGRTADGRVACPLCQ). The B box-type; atypical zinc finger occupies 93–145 (VEAVHCANCDLDCSKQDAETACFCNTCGQPLCARCRDETHRARMFARHDIVAL). Zn(2+) contacts are provided by C98, C101, C127, and H132. The tract at residues 369 to 400 (NTLAGGSGPKVLMGPSCPSPVRKVSRSPVQKP) is disordered. The stretch at 424–458 (CRHYEDSYRGLQAEVQNLKDQVQELHRDLTKHHSL) forms a coiled coil. The interval 552-594 (FQASADDESENPQTAYDASRNGETPASLLLPGSVASAEPPFVN) is disordered. Residues 562–575 (NPQTAYDASRNGET) show a composition bias toward polar residues.

As to quaternary structure, interacts with the core-glycosylated, but not the fully glycosylated form of KCNH2/HERG. Interacts with DNAJA1 and HSPA8. Interacts (via the C-terminus) with HSPA1A; this interaction additively increases KCNH2 expression.

The protein localises to the cytoplasm. In terms of biological role, plays a role in cardiac repolarization possibly by stabilizing membrane expression of the potassium channel KCNH2/HERG, or by assisting its synthesis, folding or export from the endoplasmic reticulum, in a heat shock protein-dependent manner. The sequence is that of RING finger protein 207 (RNF207) from Oryctolagus cuniculus (Rabbit).